We begin with the raw amino-acid sequence, 39 residues long: Photosystem II reaction center protein J (39 aa).

Residues 7 to 27 traverse the membrane as a helical segment; sequence IPLWIVATVAGTGALVVVGLF.

It belongs to the PsbJ family. In terms of assembly, PSII is composed of 1 copy each of membrane proteins PsbA, PsbB, PsbC, PsbD, PsbE, PsbF, PsbH, PsbI, PsbJ, PsbK, PsbL, PsbM, PsbT, PsbX, PsbY, PsbZ, Psb30/Ycf12, peripheral proteins PsbO, CyanoQ (PsbQ), PsbU, PsbV and a large number of cofactors. It forms dimeric complexes.

It is found in the cellular thylakoid membrane. Its function is as follows. One of the components of the core complex of photosystem II (PSII). PSII is a light-driven water:plastoquinone oxidoreductase that uses light energy to abstract electrons from H(2)O, generating O(2) and a proton gradient subsequently used for ATP formation. It consists of a core antenna complex that captures photons, and an electron transfer chain that converts photonic excitation into a charge separation. In Synechococcus sp. (strain ATCC 27144 / PCC 6301 / SAUG 1402/1) (Anacystis nidulans), this protein is Photosystem II reaction center protein J.